A 507-amino-acid polypeptide reads, in one-letter code: Maturase K (507 aa).

Belongs to the intron maturase 2 family. MatK subfamily.

Its subcellular location is the plastid. It is found in the chloroplast. In terms of biological role, usually encoded in the trnK tRNA gene intron. Probably assists in splicing its own and other chloroplast group II introns. This is Maturase K from Craterostigma plantagineum (Blue gem).